The primary structure comprises 153 residues: MSTANPPADLVEMWTDGACKGNPGPGGWGVLMRYGSHEKTFFGGDPQTTNNRMEILAVVEGLRALKRACTVVIHTDSQYVMKGMTEWLPNWKRRGWLTADKKPVKNAELWQLLDAQVARHEVRWQWVRGHNGDPGNEMADMLANQGVASVARN.

Residues 7–148 (PADLVEMWTD…ADMLANQGVA (142 aa)) enclose the RNase H type-1 domain. Positions 16, 54, 76, and 140 each coordinate Mg(2+).

This sequence belongs to the RNase H family. As to quaternary structure, monomer. Mg(2+) is required as a cofactor.

The protein resides in the cytoplasm. It carries out the reaction Endonucleolytic cleavage to 5'-phosphomonoester.. Its function is as follows. Endonuclease that specifically degrades the RNA of RNA-DNA hybrids. In Bordetella avium (strain 197N), this protein is Ribonuclease H.